The primary structure comprises 572 residues: Asparagine--tRNA ligase, cytoplasmic 1 (572 aa).

Alanine 2 carries the post-translational modification N-acetylalanine. Positions 53–131 (VRIGGWVKSG…QQIELNVVKV (79 aa)) form a DNA-binding region, OB. Residues 236–292 (DVEAARLIVIERGNVVAELKAAKASKEAITAAVAELKIAKETFAHIDERSRLRPGLP) enclose the WHEP-TRS domain.

Belongs to the class-II aminoacyl-tRNA synthetase family.

The protein localises to the cytoplasm. It is found in the cytosol. It catalyses the reaction tRNA(Asn) + L-asparagine + ATP = L-asparaginyl-tRNA(Asn) + AMP + diphosphate + H(+). The polypeptide is Asparagine--tRNA ligase, cytoplasmic 1 (Arabidopsis thaliana (Mouse-ear cress)).